The primary structure comprises 210 residues: Large ribosomal subunit protein bL25 (210 aa).

Residues 179–210 (LPPQQEEEIHSGEQQEPGHPDAEEGRETTPES) form a disordered region. The segment covering 185–210 (EEIHSGEQQEPGHPDAEEGRETTPES) has biased composition (basic and acidic residues).

It belongs to the bacterial ribosomal protein bL25 family. CTC subfamily. Part of the 50S ribosomal subunit; part of the 5S rRNA/L5/L18/L25 subcomplex. Contacts the 5S rRNA. Binds to the 5S rRNA independently of L5 and L18.

Its function is as follows. This is one of the proteins that binds to the 5S RNA in the ribosome where it forms part of the central protuberance. The polypeptide is Large ribosomal subunit protein bL25 (Geobacillus sp. (strain WCH70)).